Here is a 140-residue protein sequence, read N- to C-terminus: Nucleoside diphosphate kinase (140 aa).

ATP-binding residues include Lys-11, Phe-59, Arg-87, Thr-93, Arg-104, and Asn-114. Catalysis depends on His-117, which acts as the Pros-phosphohistidine intermediate.

It belongs to the NDK family. Homotetramer. Requires Mg(2+) as cofactor.

The protein localises to the cytoplasm. The enzyme catalyses a 2'-deoxyribonucleoside 5'-diphosphate + ATP = a 2'-deoxyribonucleoside 5'-triphosphate + ADP. It carries out the reaction a ribonucleoside 5'-diphosphate + ATP = a ribonucleoside 5'-triphosphate + ADP. In terms of biological role, major role in the synthesis of nucleoside triphosphates other than ATP. The ATP gamma phosphate is transferred to the NDP beta phosphate via a ping-pong mechanism, using a phosphorylated active-site intermediate. The polypeptide is Nucleoside diphosphate kinase (Bartonella henselae (strain ATCC 49882 / DSM 28221 / CCUG 30454 / Houston 1) (Rochalimaea henselae)).